A 217-amino-acid chain; its full sequence is Pyrophosphatase PpaX (217 aa).

Residue aspartate 11 is the Nucleophile of the active site.

This sequence belongs to the HAD-like hydrolase superfamily. PpaX family. The cofactor is Mg(2+).

The enzyme catalyses diphosphate + H2O = 2 phosphate + H(+). Its function is as follows. Hydrolyzes pyrophosphate formed during P-Ser-HPr dephosphorylation by HPrK/P. Might play a role in controlling the intracellular pyrophosphate pool. This is Pyrophosphatase PpaX from Listeria innocua serovar 6a (strain ATCC BAA-680 / CLIP 11262).